Reading from the N-terminus, the 266-residue chain is Tryptophan synthase alpha chain (266 aa).

Active-site proton acceptor residues include glutamate 49 and aspartate 60.

This sequence belongs to the TrpA family. In terms of assembly, tetramer of two alpha and two beta chains.

It catalyses the reaction (1S,2R)-1-C-(indol-3-yl)glycerol 3-phosphate + L-serine = D-glyceraldehyde 3-phosphate + L-tryptophan + H2O. The protein operates within amino-acid biosynthesis; L-tryptophan biosynthesis; L-tryptophan from chorismate: step 5/5. Functionally, the alpha subunit is responsible for the aldol cleavage of indoleglycerol phosphate to indole and glyceraldehyde 3-phosphate. The sequence is that of Tryptophan synthase alpha chain from Synechococcus elongatus (strain ATCC 33912 / PCC 7942 / FACHB-805) (Anacystis nidulans R2).